A 396-amino-acid chain; its full sequence is Alanine racemase (396 aa).

Lysine 46 functions as the Proton acceptor; specific for D-alanine in the catalytic mechanism. Lysine 46 bears the N6-(pyridoxal phosphate)lysine mark. Position 145 (arginine 145) interacts with substrate. Tyrosine 280 acts as the Proton acceptor; specific for L-alanine in catalysis. Methionine 328 is a substrate binding site.

It belongs to the alanine racemase family. It depends on pyridoxal 5'-phosphate as a cofactor.

It catalyses the reaction L-alanine = D-alanine. It participates in amino-acid biosynthesis; D-alanine biosynthesis; D-alanine from L-alanine: step 1/1. In terms of biological role, catalyzes the interconversion of L-alanine and D-alanine. May also act on other amino acids. This is Alanine racemase (alr) from Brucella ovis (strain ATCC 25840 / 63/290 / NCTC 10512).